The primary structure comprises 244 residues: Maintenance of ploidy protein mob2 (244 aa).

Positions 14 to 45 are disordered; the sequence is NRSKRHQNLSDASSSSGSFSKKSSTSQLVRTG. Positions 23–39 are enriched in low complexity; it reads SDASSSSGSFSKKSSTS. 2 positions are modified to phosphoserine: Ser-46 and Ser-48.

The protein belongs to the MOB1/phocein family. In terms of assembly, interacts with orb6.

It is found in the cytoplasm. Its subcellular location is the cell cortex. Required for coordinating polarized cell growth during interphase with the onset of mitosis. The polypeptide is Maintenance of ploidy protein mob2 (mob2) (Schizosaccharomyces pombe (strain 972 / ATCC 24843) (Fission yeast)).